The primary structure comprises 154 residues: 17 kDa surface antigen (154 aa).

Residues 1-19 form the signal peptide; the sequence is MKLLSKIMIIALAASMLQA. C20 is lipidated: N-palmitoyl cysteine. C20 carries S-diacylglycerol cysteine lipidation.

It belongs to the rickettsiale 17 kDa surface antigen family.

It localises to the cell outer membrane. The sequence is that of 17 kDa surface antigen (omp) from Rickettsia rhipicephali.